The primary structure comprises 305 residues: Translation initiation factor eIF2B subunit alpha (305 aa).

K35 is modified (N6-acetyllysine).

The protein belongs to the eIF-2B alpha/beta/delta subunits family. Component of the translation initiation factor 2B (eIF2B) complex which is a heterodecamer of two sets of five different subunits: alpha, beta, gamma, delta and epsilon. Subunits alpha, beta and delta comprise a regulatory subcomplex and subunits epsilon and gamma comprise a catalytic subcomplex. Within the complex, the hexameric regulatory complex resides at the center, with the two heterodimeric catalytic subcomplexes bound on opposite sides.

The protein resides in the cytoplasm. It localises to the cytosol. Activated by the chemical integrated stress response (ISR) inhibitor ISRIB which stimulates guanine nucleotide exchange factor activity for both phosphorylated and unphosphorylated eIF2. In terms of biological role, acts as a component of the translation initiation factor 2B (eIF2B) complex, which catalyzes the exchange of GDP for GTP on eukaryotic initiation factor 2 (eIF2) gamma subunit. Its guanine nucleotide exchange factor activity is repressed when bound to eIF2 complex phosphorylated on the alpha subunit, thereby limiting the amount of methionyl-initiator methionine tRNA available to the ribosome and consequently global translation is repressed. The protein is Translation initiation factor eIF2B subunit alpha (Eif2b1) of Rattus norvegicus (Rat).